A 732-amino-acid chain; its full sequence is MGRREEMIAKIKELMTQPERIRNMGIAAHIDHGKTTLSDNLLAGAGMISEELAGKQLVLDFDEQEQARGITINAANVSMVHTYEGKEYLINLIDTPGHVDFGGDVTRAMRAIDGAIIVVDAVEGVMPQTETVLRQALREYVKPVLFINKVDRLIKELKLGPNEILNRFAKIITDVNRLIKRYAPEEFKNQWLVKVEDGSVAFGSAYYNWALSVPYMKRTGVTFKDIVELTNAGDLKTLRQKAPLHVVVLDMVVRHLPNPLEAQKYRIPHLWRGDINSDVGQAMINCDPKGKMVMVVTKIILDKHAGEVATGRVWSGTVKTGQEVYLINSKRKARIQQVGIYMGPERVNMEAVQAGNIVAVTGLRDAMAGETVSVEQIEPFEALHYTSEPVVTVAIEAKNVKDLPKLIEALRQLAKEDPTLHVKIDEETGQHLLSGMGELHLEVKLYRLKTEWKLDVDVSPPIVVYRESVTKQSPIVEGKSPNKHNRFYITVEPLPDAIYEAIREGEIPEGRPKDPKAVAKKLAELGLDYEIAKGIVDVYNGNIFLDNTKGIQYLNEVMDLLVDGFHQAMDEGPLAKEPVMKVMVRLHDAKIHEDNVHRGPAQIYPAIRTAIHCAMMKAGPVLYEPYQKVIINIPYEYMGSVSREINQRRGQLIDMRQEGEVMIIISEAPVAEMFGFAGALRGATSGKALWSTEHAGFKRVPNELAVNIIRQIRQRKGLDPNPPKEQDVCPQQ.

The 242-residue stretch at 19-260 (ERIRNMGIAA…MVVRHLPNPL (242 aa)) folds into the tr-type G domain. Residues 28–35 (AHIDHGKT), 94–98 (DTPGH), and 148–151 (NKVD) each bind GTP. Diphthamide is present on histidine 597.

This sequence belongs to the TRAFAC class translation factor GTPase superfamily. Classic translation factor GTPase family. EF-G/EF-2 subfamily.

It is found in the cytoplasm. Catalyzes the GTP-dependent ribosomal translocation step during translation elongation. During this step, the ribosome changes from the pre-translocational (PRE) to the post-translocational (POST) state as the newly formed A-site-bound peptidyl-tRNA and P-site-bound deacylated tRNA move to the P and E sites, respectively. Catalyzes the coordinated movement of the two tRNA molecules, the mRNA and conformational changes in the ribosome. The chain is Elongation factor 2 from Thermococcus onnurineus (strain NA1).